Here is a 507-residue protein sequence, read N- to C-terminus: GMP synthase [glutamine-hydrolyzing] 1 (507 aa).

The 190-residue stretch at 4–193 folds into the Glutamine amidotransferase type-1 domain; sequence KIIILDFGSQ…VVDVCGCKQD (190 aa). Cysteine 79 (nucleophile) is an active-site residue. Residues histidine 167 and glutamate 169 contribute to the active site. A GMPS ATP-PPase domain is found at 194–382; the sequence is WSPASFIEST…LGMPEHLITR (189 aa). An ATP-binding site is contributed by 221 to 227; the sequence is SGGVDSS.

In terms of assembly, homodimer.

The catalysed reaction is XMP + L-glutamine + ATP + H2O = GMP + L-glutamate + AMP + diphosphate + 2 H(+). Its pathway is purine metabolism; GMP biosynthesis; GMP from XMP (L-Gln route): step 1/1. In terms of biological role, catalyzes the synthesis of GMP from XMP. The chain is GMP synthase [glutamine-hydrolyzing] 1 (guaA1) from Bacteroides thetaiotaomicron (strain ATCC 29148 / DSM 2079 / JCM 5827 / CCUG 10774 / NCTC 10582 / VPI-5482 / E50).